We begin with the raw amino-acid sequence, 248 residues long: 2,3-bisphosphoglycerate-dependent phosphoglycerate mutase (248 aa).

Substrate-binding positions include 8-15 (RHGESVWN), 21-22 (TG), arginine 60, 87-90 (ERHY), lysine 98, and 114-115 (RR). Histidine 9 serves as the catalytic Tele-phosphohistidine intermediate. Glutamate 87 acts as the Proton donor/acceptor in catalysis. The interval 116–135 (SYDTPPPPMEVSDPRHPSHD) is disordered. 183-184 (GN) is a substrate binding site.

The protein belongs to the phosphoglycerate mutase family. BPG-dependent PGAM subfamily. Homodimer.

It carries out the reaction (2R)-2-phosphoglycerate = (2R)-3-phosphoglycerate. It participates in carbohydrate degradation; glycolysis; pyruvate from D-glyceraldehyde 3-phosphate: step 3/5. In terms of biological role, catalyzes the interconversion of 2-phosphoglycerate and 3-phosphoglycerate. This Bdellovibrio bacteriovorus (strain ATCC 15356 / DSM 50701 / NCIMB 9529 / HD100) protein is 2,3-bisphosphoglycerate-dependent phosphoglycerate mutase.